The following is a 186-amino-acid chain: Early nodulin-like protein 13 (186 aa).

The first 23 residues, methionine 1–serine 23, serve as a signal peptide directing secretion. One can recognise a Phytocyanin domain in the interval lysine 24–serine 128. Cysteine 82 and cysteine 116 are oxidised to a cystine. N-linked (GlcNAc...) asparagine glycosylation is found at asparagine 83 and asparagine 90. The GPI-anchor amidated alanine moiety is linked to residue alanine 165. The propeptide at serine 166 to leucine 186 is removed in mature form.

It belongs to the early nodulin-like (ENODL) family. In terms of tissue distribution, mostly expressed in seedlings, siliques and flowers, and, to a lower extent, in roots, stems and seeds, but barely in leaves.

Its subcellular location is the cell membrane. In terms of biological role, may act as a carbohydrate transporter. Required, together with ENODL11, ENODL12, ENODL13, ENODL14 and ENODL15, for male-female communication and pollen tube reception and burst at the synergid cell surface of the female gametophyte. This chain is Early nodulin-like protein 13, found in Arabidopsis thaliana (Mouse-ear cress).